The following is a 355-amino-acid chain: Mannonate dehydratase (355 aa).

The protein belongs to the mannonate dehydratase family. The cofactor is Fe(2+). Mn(2+) serves as cofactor.

The catalysed reaction is D-mannonate = 2-dehydro-3-deoxy-D-gluconate + H2O. Its pathway is carbohydrate metabolism; pentose and glucuronate interconversion. Functionally, catalyzes the dehydration of D-mannonate. The protein is Mannonate dehydratase of Brachyspira hyodysenteriae (strain ATCC 49526 / WA1).